Consider the following 402-residue polypeptide: Elongation factor Tu (402 aa).

One can recognise a tr-type G domain in the interval 16–211 (KEHINIGTIG…AVDSYIDSPV (196 aa)). The segment at 25–32 (GHVDHGKT) is G1. Residue 25–32 (GHVDHGKT) coordinates GTP. T32 lines the Mg(2+) pocket. Residues 66–70 (GITIN) are G2. The tract at residues 87–90 (DCPG) is G3. Residues 87 to 91 (DCPGH) and 142 to 145 (NKID) contribute to the GTP site. Residues 142-145 (NKID) form a G4 region. The segment at 181-183 (SAR) is G5.

Belongs to the TRAFAC class translation factor GTPase superfamily. Classic translation factor GTPase family. EF-Tu/EF-1A subfamily. In terms of assembly, monomer.

The protein localises to the cytoplasm. The catalysed reaction is GTP + H2O = GDP + phosphate + H(+). Functionally, GTP hydrolase that promotes the GTP-dependent binding of aminoacyl-tRNA to the A-site of ribosomes during protein biosynthesis. The protein is Elongation factor Tu of Mesomycoplasma hyopneumoniae (strain 232) (Mycoplasma hyopneumoniae).